Consider the following 683-residue polypeptide: Acetyl-coenzyme A synthetase 2 (683 aa).

CoA-binding positions include 207–210 (RGGK) and Thr326. ATP is bound by residues 402–404 (GEP), 426–431 (DTFWQT), Asp517, and Arg532. A CoA-binding site is contributed by Ser540. Arg543 contributes to the ATP binding site. Arg613 is a binding site for CoA.

The protein belongs to the ATP-dependent AMP-binding enzyme family.

The enzyme catalyses acetate + ATP + CoA = acetyl-CoA + AMP + diphosphate. In Candida glabrata (strain ATCC 2001 / BCRC 20586 / JCM 3761 / NBRC 0622 / NRRL Y-65 / CBS 138) (Yeast), this protein is Acetyl-coenzyme A synthetase 2 (ACS2).